Consider the following 308-residue polypeptide: Tetraacyldisaccharide 4'-kinase (308 aa).

Position 63-70 (63-70) interacts with ATP; the sequence is SFGGNGKT.

It belongs to the LpxK family.

It catalyses the reaction a lipid A disaccharide + ATP = a lipid IVA + ADP + H(+). Its pathway is glycolipid biosynthesis; lipid IV(A) biosynthesis; lipid IV(A) from (3R)-3-hydroxytetradecanoyl-[acyl-carrier-protein] and UDP-N-acetyl-alpha-D-glucosamine: step 6/6. Transfers the gamma-phosphate of ATP to the 4'-position of a tetraacyldisaccharide 1-phosphate intermediate (termed DS-1-P) to form tetraacyldisaccharide 1,4'-bis-phosphate (lipid IVA). This Campylobacter jejuni (strain RM1221) protein is Tetraacyldisaccharide 4'-kinase.